The following is a 312-amino-acid chain: 2,3-dihydroxyphenylpropionate/2,3-dihydroxicinnamic acid 1,2-dioxygenase 1 (312 aa).

The active-site Proton donor is the His115. Catalysis depends on His179, which acts as the Proton acceptor.

It belongs to the LigB/MhpB extradiol dioxygenase family. Homotetramer. Fe(2+) serves as cofactor.

It catalyses the reaction 3-(2,3-dihydroxyphenyl)propanoate + O2 = (2Z,4E)-2-hydroxy-6-oxonona-2,4-dienedioate + H(+). It carries out the reaction (2E)-3-(2,3-dihydroxyphenyl)prop-2-enoate + O2 = (2Z,4E,7E)-2-hydroxy-6-oxonona-2,4,7-trienedioate + H(+). It participates in aromatic compound metabolism; 3-phenylpropanoate degradation. Functionally, catalyzes the non-heme iron(II)-dependent oxidative cleavage of 2,3-dihydroxyphenylpropionic acid and 2,3-dihydroxicinnamic acid into 2-hydroxy-6-ketononadienedioate and 2-hydroxy-6-ketononatrienedioate, respectively. This Dechloromonas aromatica (strain RCB) protein is 2,3-dihydroxyphenylpropionate/2,3-dihydroxicinnamic acid 1,2-dioxygenase 1.